A 430-amino-acid chain; its full sequence is Tol-Pal system protein TolB (430 aa).

Positions 1–21 (MKQALRVAFGFLILWASVLHA) are cleaved as a signal peptide.

Belongs to the TolB family. In terms of assembly, the Tol-Pal system is composed of five core proteins: the inner membrane proteins TolA, TolQ and TolR, the periplasmic protein TolB and the outer membrane protein Pal. They form a network linking the inner and outer membranes and the peptidoglycan layer.

The protein resides in the periplasm. Functionally, part of the Tol-Pal system, which plays a role in outer membrane invagination during cell division and is important for maintaining outer membrane integrity. TolB occupies a key intermediary position in the Tol-Pal system because it communicates directly with both membrane-embedded components, Pal in the outer membrane and TolA in the inner membrane. The sequence is that of Tol-Pal system protein TolB from Escherichia coli O139:H28 (strain E24377A / ETEC).